The primary structure comprises 87 residues: Phosphoribosyl-ATP pyrophosphatase (87 aa).

This sequence belongs to the PRA-PH family.

Its subcellular location is the cytoplasm. It catalyses the reaction 1-(5-phospho-beta-D-ribosyl)-ATP + H2O = 1-(5-phospho-beta-D-ribosyl)-5'-AMP + diphosphate + H(+). It functions in the pathway amino-acid biosynthesis; L-histidine biosynthesis; L-histidine from 5-phospho-alpha-D-ribose 1-diphosphate: step 2/9. This Bifidobacterium adolescentis (strain ATCC 15703 / DSM 20083 / NCTC 11814 / E194a) protein is Phosphoribosyl-ATP pyrophosphatase.